The primary structure comprises 262 residues: Zinc import ATP-binding protein ZnuC (262 aa).

The 216-residue stretch at 6–221 (IRLDKVAVTL…PAFVELFGKN (216 aa)) folds into the ABC transporter domain. Position 38 to 45 (38 to 45 (GPNGAGKT)) interacts with ATP.

This sequence belongs to the ABC transporter superfamily. Zinc importer (TC 3.A.1.15.5) family. As to quaternary structure, the complex is composed of two ATP-binding proteins (ZnuC), two transmembrane proteins (ZnuB) and a solute-binding protein (ZnuA).

Its subcellular location is the cell inner membrane. The catalysed reaction is Zn(2+)(out) + ATP(in) + H2O(in) = Zn(2+)(in) + ADP(in) + phosphate(in) + H(+)(in). Part of the ABC transporter complex ZnuABC involved in zinc import. Responsible for energy coupling to the transport system. The sequence is that of Zinc import ATP-binding protein ZnuC from Pseudomonas syringae pv. syringae (strain B728a).